The chain runs to 346 residues: MNTADTPRKVGARWMNGELWGEGREYETFVFKNRCLAELLGLKEKVTIADISKHVYNGCPTNTPEVILFWKSHSSLIYILSKVTYCYSIIISSGSLNDPVMNEKPRLYLRDHVALSPMAWPESIEIEKVSMTADRCPPCDVYAENFLIQPNAHINGRLEAMLALCFCILADTTKFPARNIDFNYFIRTANQSTNPPFIQCPPLQHQFLCHVALMELGERNETNMVLNALYVEIMWVSRPVCEFSVYTEFKHKLVTTCRLLNSIYHSHEKLPKPTARADLAQSSQCVKTYFNGENVNVTVLAYGIYVLHKMSRVENPRHLVSYFQKYIRVERHVTKSQLKRLLMMYY.

The protein belongs to the herpesviridae U59/UL88 family.

The protein is Protein U59 of Elephantid herpesvirus 1 (isolate Asian elephant/Berlin/Kiba/1998) (EIHV-1).